The sequence spans 353 residues: UDP-N-acetylglucosamine--N-acetylmuramyl-(pentapeptide) pyrophosphoryl-undecaprenol N-acetylglucosamine transferase (353 aa).

UDP-N-acetyl-alpha-D-glucosamine contacts are provided by residues threonine 10–glycine 12, asparagine 124, serine 183, and glutamine 283.

This sequence belongs to the glycosyltransferase 28 family. MurG subfamily.

Its subcellular location is the cell inner membrane. The catalysed reaction is di-trans,octa-cis-undecaprenyl diphospho-N-acetyl-alpha-D-muramoyl-L-alanyl-D-glutamyl-meso-2,6-diaminopimeloyl-D-alanyl-D-alanine + UDP-N-acetyl-alpha-D-glucosamine = di-trans,octa-cis-undecaprenyl diphospho-[N-acetyl-alpha-D-glucosaminyl-(1-&gt;4)]-N-acetyl-alpha-D-muramoyl-L-alanyl-D-glutamyl-meso-2,6-diaminopimeloyl-D-alanyl-D-alanine + UDP + H(+). The protein operates within cell wall biogenesis; peptidoglycan biosynthesis. Functionally, cell wall formation. Catalyzes the transfer of a GlcNAc subunit on undecaprenyl-pyrophosphoryl-MurNAc-pentapeptide (lipid intermediate I) to form undecaprenyl-pyrophosphoryl-MurNAc-(pentapeptide)GlcNAc (lipid intermediate II). This is UDP-N-acetylglucosamine--N-acetylmuramyl-(pentapeptide) pyrophosphoryl-undecaprenol N-acetylglucosamine transferase from Helicobacter pylori (strain Shi470).